Consider the following 511-residue polypeptide: Acidic amino acid decarboxylase GADL1 (511 aa).

N6-(pyridoxal phosphate)lysine is present on Lys323.

It belongs to the group II decarboxylase family. Homodimer. Pyridoxal 5'-phosphate is required as a cofactor.

It catalyses the reaction L-aspartate + H(+) = beta-alanine + CO2. The enzyme catalyses 3-sulfino-L-alanine + H(+) = hypotaurine + CO2. In terms of biological role, catalyzes the decarboxylation of L-aspartate, 3-sulfino-L-alanine (cysteine sulfinic acid), and L-cysteate to beta-alanine, hypotaurine and taurine, respectively. The preferred substrate is L-aspartate. Does not exhibit any decarboxylation activity toward glutamate. The polypeptide is Acidic amino acid decarboxylase GADL1 (gadl1) (Xenopus tropicalis (Western clawed frog)).